Reading from the N-terminus, the 376-residue chain is Flagellin B (376 aa).

Positions 103-129 form a coiled coil; the sequence is SNSSSERRAIQEEVSALNDELNRIAET.

Belongs to the bacterial flagellin family. In terms of assembly, heteromer of multiple flagellin subunits including FlaA, FlaB, FlaC, FlaD and FlaE.

It localises to the secreted. Its subcellular location is the bacterial flagellum. In terms of biological role, flagellin is the subunit protein which polymerizes to form the filaments of bacterial flagella. FlaB is not essential for flagellar synthesis and motility. This Vibrio cholerae serotype O1 (strain ATCC 39541 / Classical Ogawa 395 / O395) protein is Flagellin B (flaB).